Consider the following 976-residue polypeptide: Vacuolar membrane protease (976 aa).

Topologically, residues 1 to 51 (MPLSTGLTLSSLNVMEKADNHYNMMTKQPPALSPVDMVSSRRGFNPIAFTP) are cytoplasmic. Residues 52–72 (WPVTILSSLVYLAFIIPIIVV) traverse the membrane as a helical segment. Over 73 to 399 (HHLVPPAPKE…DNGNDGKLNN (327 aa)) the chain is Vacuolar. Residues Asn-147 and Asn-150 are each glycosylated (N-linked (GlcNAc...) asparagine). Zn(2+) contacts are provided by His-206 and Asp-218. Catalysis depends on Glu-252, which acts as the Proton acceptor. Glu-253, Glu-278, and His-351 together coordinate Zn(2+). The chain crosses the membrane as a helical span at residues 400–420 (GAGTLGVWFDFYGSSFAVFEL). Residues 421 to 427 (NTLFGHS) lie on the Cytoplasmic side of the membrane. Residues 428 to 448 (VALLVVAPLLLIATCVTLYTL) form a helical membrane-spanning segment. Topologically, residues 449-477 (DKMYMFSMYTYLSESGGQVSLYGLRGLFR) are vacuolar. Residues 478–498 (FPLILGISTALTIGLAFLLMK) form a helical membrane-spanning segment. Over 499-519 (ANPFIIYSSPYAVWNPSALHR) the chain is Cytoplasmic. Residues 520–540 (AYAFTWMFGMMWVLLVIATVY) traverse the membrane as a helical segment. Residues 541–550 (QKQHGIASSY) lie on the Vacuolar side of the membrane. A helical membrane pass occupies residues 551–571 (FIVFYFAGVSIATWISYLELF). Residues 572–675 (GLPTTQDYAR…HRLEQRWSIN (104 aa)) are Cytoplasmic-facing. The interval 590–633 (TPSSDSRLLAPSADELPPSGSAAGHDFNPEDVEDEEPTESTSLL) is disordered. The span at 618-627 (PEDVEDEEPT) shows a compositional bias: acidic residues. A helical membrane pass occupies residues 676–696 (LISSAWILQFLFVAPIVIILL). The Vacuolar portion of the chain corresponds to 697–718 (GQLGLFLTSATYQIGADGGSQL). A helical membrane pass occupies residues 719 to 739 (VIYVGIAVLSVLILLPLFPFI). The Cytoplasmic segment spans residues 740–745 (HRFTYH). A helical transmembrane segment spans residues 746 to 766 (IPTFLLFVLIGTLVYNLTAFP). Over 767–976 (FSHSNRLKVA…LVEGSHSFKL (210 aa)) the chain is Vacuolar. Asn-848 is a glycosylation site (N-linked (GlcNAc...) asparagine).

Belongs to the peptidase M28 family. Zn(2+) serves as cofactor.

Its subcellular location is the vacuole membrane. May be involved in vacuolar sorting and osmoregulation. The sequence is that of Vacuolar membrane protease from Arthroderma otae (strain ATCC MYA-4605 / CBS 113480) (Microsporum canis).